The primary structure comprises 207 residues: Ribosomal RNA small subunit methyltransferase G (207 aa).

Residues G74, F79, 124–125 (VE), and R138 each bind S-adenosyl-L-methionine.

The protein belongs to the methyltransferase superfamily. RNA methyltransferase RsmG family.

The protein localises to the cytoplasm. It catalyses the reaction guanosine(527) in 16S rRNA + S-adenosyl-L-methionine = N(7)-methylguanosine(527) in 16S rRNA + S-adenosyl-L-homocysteine. In terms of biological role, specifically methylates the N7 position of guanine in position 527 of 16S rRNA. This Hyphomonas neptunium (strain ATCC 15444) protein is Ribosomal RNA small subunit methyltransferase G.